Here is a 346-residue protein sequence, read N- to C-terminus: Biotin synthase (346 aa).

Positions 38 to 256 constitute a Radical SAM core domain; it reads RQVQVSTLLS…IAVARIMMPT (219 aa). [4Fe-4S] cluster-binding residues include Cys-53, Cys-57, and Cys-60. Residues Cys-97, Cys-128, Cys-188, and Arg-260 each coordinate [2Fe-2S] cluster.

Belongs to the radical SAM superfamily. Biotin synthase family. Homodimer. [4Fe-4S] cluster is required as a cofactor. The cofactor is [2Fe-2S] cluster.

The enzyme catalyses (4R,5S)-dethiobiotin + (sulfur carrier)-SH + 2 reduced [2Fe-2S]-[ferredoxin] + 2 S-adenosyl-L-methionine = (sulfur carrier)-H + biotin + 2 5'-deoxyadenosine + 2 L-methionine + 2 oxidized [2Fe-2S]-[ferredoxin]. Its pathway is cofactor biosynthesis; biotin biosynthesis; biotin from 7,8-diaminononanoate: step 2/2. Its function is as follows. Catalyzes the conversion of dethiobiotin (DTB) to biotin by the insertion of a sulfur atom into dethiobiotin via a radical-based mechanism. The protein is Biotin synthase of Escherichia fergusonii (strain ATCC 35469 / DSM 13698 / CCUG 18766 / IAM 14443 / JCM 21226 / LMG 7866 / NBRC 102419 / NCTC 12128 / CDC 0568-73).